The following is a 444-amino-acid chain: Glutamyl-tRNA reductase (444 aa).

Substrate-binding positions include 49-52, S109, 114-116, and Q120; these read TCNR and ETQ. The active-site Nucleophile is the C50. An NADP(+)-binding site is contributed by 189–194; it reads GAGKMG.

The protein belongs to the glutamyl-tRNA reductase family. In terms of assembly, homodimer.

The catalysed reaction is (S)-4-amino-5-oxopentanoate + tRNA(Glu) + NADP(+) = L-glutamyl-tRNA(Glu) + NADPH + H(+). Its pathway is porphyrin-containing compound metabolism; protoporphyrin-IX biosynthesis; 5-aminolevulinate from L-glutamyl-tRNA(Glu): step 1/2. Catalyzes the NADPH-dependent reduction of glutamyl-tRNA(Glu) to glutamate 1-semialdehyde (GSA). This Bacillus cereus (strain ATCC 10987 / NRS 248) protein is Glutamyl-tRNA reductase.